Here is a 982-residue protein sequence, read N- to C-terminus: MRRFEFALARMSGAAFCVYTGYRLLTSKWLADRVEDYRQRIIAEKKQILRDAAMIRTQIQREMELVRISVRKGHSHQEAATERNSATETMLGVVEKCGYEPYVISPSPREVGYHGSRQFYSLADFRQDYRRDDITDRHIIVMTDVDYYVDMHELIGLGVPILLYTFQPSTVSGEVKDGYFTITDDSVHYRVAGGKDVRHRIWNYNHDTMYVCSRPRGFWANLMQILRDITGVTAICSFLYTKLGIAPFGDPVTMFTVDQFKMGEHRNIVSIVPFATCRSNLLKISEYGAELEYMRYQQRNNIANFNAVTYISENGPLISLGLEGNFASVQLPLQDFENIRTAYELSKTNNLSDTVRRSGRPCKEAAIIHKCLQAECAVVSEVVHKPGDLARHYQAVGSAYDTDPAEQGKCYAREYAPGPLTQTAVFPSESRSNELATIDGRIAGPQAKAKSREHITPKMRKVARDFVHHLVPIAGTGRPYPLTYVEEQQTKPLQRARNDANRYHDEFTMMVKAFQKKEAYNAPNYPRNISTVPHTQNVKLSSYTYAFKASVLQHVPWYMPTHTPAEIADAVQNLAASSTELVETDYSKFDGTFLRFMRECVEFAIYKRWVHLDHLPELTTLLANEIQAPAVTRLGIKYDPDCSRLSGSALTTDGNSIANAFVSYLAGRMAGMDDDEAWSWIGIVYGDDGLRSGNVSNELLTNTASSLGFDLKIVNRAPRGSPVTFLSRVYLDPWSSPASVQSPLRTLLKLHTTCDTQSEIDDIGWAKTQAYLVTDSKTPFIGHWCRAYQRNCTARVVQYADYADIPFWVKNDDHVGNSWPQSESDDWNDIVANELGVTTAELLKHLALLDAYAGPISGLPRLTTSIDLEPKMSVALDGEIQAGPSQNKTSKDGTNPTSDRSAPRRARAALPGDDGHARRSRRSDRDPGKRDAHVRDKRPRRSSPPTRPVTPVPTPSSGDRGTDGDGLGRAAVRQRQRRRTQV.

The RdRp catalytic domain maps to 579 to 701 (TELVETDYSK…SGNVSNELLT (123 aa)). The interval 879–982 (EIQAGPSQNK…RQRQRRRTQV (104 aa)) is disordered. Residues 883-899 (GPSQNKTSKDGTNPTSD) show a composition bias toward polar residues. Residues 913-934 (DDGHARRSRRSDRDPGKRDAHV) show a composition bias toward basic and acidic residues. Residues 945 to 954 (PTRPVTPVPT) show a composition bias toward pro residues. Over residues 972–982 (VRQRQRRRTQV) the composition is skewed to basic residues.

Belongs to the nodaviridae RNA polymerase family.

It catalyses the reaction RNA(n) + a ribonucleoside 5'-triphosphate = RNA(n+1) + diphosphate. Its function is as follows. RNA-dependent RNA polymerase which replicates the viral genome composed of 2 RNA segments, RNA1 and RNA2. The polypeptide is RNA-directed RNA polymerase (Epinephelus tauvina (Greasy grouper)).